We begin with the raw amino-acid sequence, 390 residues long: 1-deoxy-D-xylulose 5-phosphate reductoisomerase (390 aa).

NADPH-binding residues include threonine 10, glycine 11, serine 12, isoleucine 13, glycine 36, arginine 37, asparagine 38, and asparagine 121. Lysine 122 provides a ligand contact to 1-deoxy-D-xylulose 5-phosphate. Glutamate 123 contributes to the NADPH binding site. Aspartate 147 is a binding site for Mn(2+). 4 residues coordinate 1-deoxy-D-xylulose 5-phosphate: serine 148, glutamate 149, serine 173, and histidine 196. Glutamate 149 serves as a coordination point for Mn(2+). Glycine 202 provides a ligand contact to NADPH. 1-deoxy-D-xylulose 5-phosphate contacts are provided by serine 209, asparagine 214, lysine 215, and glutamate 218. Glutamate 218 serves as a coordination point for Mn(2+). Residues 367–390 (AASEHGRREAEKRVGARAHAPASR) form a disordered region. A compositionally biased stretch (basic and acidic residues) spans 370–380 (EHGRREAEKRV).

This sequence belongs to the DXR family. Requires Mg(2+) as cofactor. Mn(2+) is required as a cofactor.

It carries out the reaction 2-C-methyl-D-erythritol 4-phosphate + NADP(+) = 1-deoxy-D-xylulose 5-phosphate + NADPH + H(+). Its pathway is isoprenoid biosynthesis; isopentenyl diphosphate biosynthesis via DXP pathway; isopentenyl diphosphate from 1-deoxy-D-xylulose 5-phosphate: step 1/6. Catalyzes the NADPH-dependent rearrangement and reduction of 1-deoxy-D-xylulose-5-phosphate (DXP) to 2-C-methyl-D-erythritol 4-phosphate (MEP). The sequence is that of 1-deoxy-D-xylulose 5-phosphate reductoisomerase from Anaeromyxobacter dehalogenans (strain 2CP-1 / ATCC BAA-258).